The following is a 415-amino-acid chain: Levansucrase (415 aa).

Sucrose-binding residues include tryptophan 45, aspartate 46, alanine 132, arginine 202, and aspartate 203. Aspartate 46 acts as the Nucleophile in catalysis. The Proton donor/acceptor role is filled by glutamate 287.

The protein belongs to the glycosyl hydrolase 68 family.

The catalysed reaction is [6)-beta-D-fructofuranosyl-(2-&gt;](n) alpha-D-glucopyranoside + sucrose = [6)-beta-D-fructofuranosyl-(2-&gt;](n+1) alpha-D-glucopyranoside + D-glucose. Functionally, catalyzes the synthesis of levan, a fructose polymer, by transferring the fructosyl moiety from sucrose to a growing acceptor molecule. The polypeptide is Levansucrase (Rahnella aquatilis (strain ATCC 33071 / DSM 4594 / JCM 1683 / NBRC 105701 / NCIMB 13365 / CIP 78.65)).